The sequence spans 590 residues: Acetolactate synthase large subunit (590 aa).

Residue E61 coordinates thiamine diphosphate. FAD is bound by residues R163, 271–292, and 314–333; these read HGTA…LGAR and DIDP…IVGD. Positions 405 to 484 are thiamine pyrophosphate binding; the sequence is QHQMWSAQFL…VKIIIINNRW (80 aa). The Mg(2+) site is built by D455 and N482.

This sequence belongs to the TPP enzyme family. As to quaternary structure, dimer of large and small chains. Mg(2+) is required as a cofactor. Requires thiamine diphosphate as cofactor.

Its subcellular location is the plastid. The protein localises to the chloroplast. It carries out the reaction 2 pyruvate + H(+) = (2S)-2-acetolactate + CO2. It participates in amino-acid biosynthesis; L-isoleucine biosynthesis; L-isoleucine from 2-oxobutanoate: step 1/4. The protein operates within amino-acid biosynthesis; L-valine biosynthesis; L-valine from pyruvate: step 1/4. The protein is Acetolactate synthase large subunit (ilvB) of Pyropia yezoensis (Susabi-nori).